The following is a 49-amino-acid chain: Large ribosomal subunit protein uL16 (49 aa).

The protein belongs to the universal ribosomal protein uL16 family. As to quaternary structure, part of the 50S ribosomal subunit.

In terms of biological role, binds 23S rRNA and is also seen to make contacts with the A and possibly P site tRNAs. The protein is Large ribosomal subunit protein uL16 (rplP) of Aquifex pyrophilus.